An 882-amino-acid chain; its full sequence is DNA mismatch repair protein MutS (882 aa).

An ATP-binding site is contributed by 627–634 (GPNMAGKS).

This sequence belongs to the DNA mismatch repair MutS family.

Its function is as follows. This protein is involved in the repair of mismatches in DNA. It is possible that it carries out the mismatch recognition step. This protein has a weak ATPase activity. This chain is DNA mismatch repair protein MutS, found in Anaeromyxobacter dehalogenans (strain 2CP-C).